Here is a 249-residue protein sequence, read N- to C-terminus: Transmembrane protein 150C (249 aa).

Over 1-9 the chain is Cytoplasmic; the sequence is MDGKKCSVW. The helical transmembrane segment at 10-30 threads the bilayer; it reads MFLPLVFTLFTSAGLWIVYFI. Over 31–64 the chain is Extracellular; the sequence is AVEDDKILPLNSAERKPGVKHAPYISIAGDDPPA. Residues 65–85 traverse the membrane as a helical segment; that stretch reads SCVFSQVMNMAAFLALVVAVL. Residues 86–97 lie on the Cytoplasmic side of the membrane; sequence RFIQLKPKVLNP. The helical transmembrane segment at 98–118 threads the bilayer; sequence WLNISGLVALCLASFGMTLLG. Residues 119–130 are Extracellular-facing; sequence NFQLTNDEEIHN. The chain crosses the membrane as a helical span at residues 131-151; that stretch reads VGTSLTFGFGTLTCWIQAALT. Residues 152-168 are Cytoplasmic-facing; sequence LKVNIKNEGRRVGIPRV. The chain crosses the membrane as a helical span at residues 169 to 189; sequence ILSASITLCVVLYFILMAQSI. At 190–192 the chain is on the extracellular side; it reads HMY. A helical membrane pass occupies residues 193–213; it reads AARVQWGLVMCFLSYFGTFAV. Residues 214–249 are Cytoplasmic-facing; it reads EFRHYRYEIVCSEYQENFLSFSESLSEASEYQTDQV.

This sequence belongs to the DRAM/TMEM150 family.

It localises to the cell membrane. The protein resides in the lysosome membrane. The enzyme catalyses Ca(2+)(in) = Ca(2+)(out). It carries out the reaction Na(+)(in) = Na(+)(out). It catalyses the reaction K(+)(in) = K(+)(out). The catalysed reaction is Mg(2+)(in) = Mg(2+)(out). Nonselective cationic channel with high permeability to Ca(2+). Component of a mechanosensitive cation channel, confers mechanically activated (MA) currents with slow inactivation kinetics. May contribute to proprioception. The protein is Transmembrane protein 150C of Homo sapiens (Human).